An 862-amino-acid polypeptide reads, in one-letter code: Eukaryotic translation initiation factor 3 subunit C (862 aa).

A disordered region spans residues 1–81 (MSSRFFYGGG…EEEEKVTVVK (81 aa)). Over residues 17 to 54 (SSDEEELYSDREEEEKSEEEESSEEEDETSEEEESDEE) the composition is skewed to acidic residues. Positions 55–65 (TGAKKFLKDVA) are enriched in basic and acidic residues. Positions 66–75 (SDSEEEEEEE) are enriched in acidic residues. The PCI domain maps to 600-774 (FHMHINLELL…NAIVFRKGVE (175 aa)). Residues 813-862 (RDQGAGARGGRGSGRGGQARGGPRFPGGQQGRRPGGQQFGGGALGGAIKA) form a disordered region. A compositionally biased stretch (gly residues) spans 818–862 (GARGGRGSGRGGQARGGPRFPGGQQGRRPGGQQFGGGALGGAIKA).

The protein belongs to the eIF-3 subunit C family. Component of the eukaryotic translation initiation factor 3 (eIF-3) complex.

The protein resides in the cytoplasm. Its function is as follows. Component of the eukaryotic translation initiation factor 3 (eIF-3) complex, which is involved in protein synthesis of a specialized repertoire of mRNAs and, together with other initiation factors, stimulates binding of mRNA and methionyl-tRNAi to the 40S ribosome. The eIF-3 complex specifically targets and initiates translation of a subset of mRNAs involved in cell proliferation. The polypeptide is Eukaryotic translation initiation factor 3 subunit C (nip1) (Neosartorya fischeri (strain ATCC 1020 / DSM 3700 / CBS 544.65 / FGSC A1164 / JCM 1740 / NRRL 181 / WB 181) (Aspergillus fischerianus)).